The primary structure comprises 235 residues: Ubiquinone/menaquinone biosynthesis C-methyltransferase UbiE (235 aa).

Threonine 60 and aspartate 81 together coordinate S-adenosyl-L-methionine.

The protein belongs to the class I-like SAM-binding methyltransferase superfamily. MenG/UbiE family.

It carries out the reaction a 2-demethylmenaquinol + S-adenosyl-L-methionine = a menaquinol + S-adenosyl-L-homocysteine + H(+). The catalysed reaction is a 2-methoxy-6-(all-trans-polyprenyl)benzene-1,4-diol + S-adenosyl-L-methionine = a 5-methoxy-2-methyl-3-(all-trans-polyprenyl)benzene-1,4-diol + S-adenosyl-L-homocysteine + H(+). It functions in the pathway quinol/quinone metabolism; menaquinone biosynthesis; menaquinol from 1,4-dihydroxy-2-naphthoate: step 2/2. It participates in cofactor biosynthesis; ubiquinone biosynthesis. Methyltransferase required for the conversion of demethylmenaquinol (DMKH2) to menaquinol (MKH2) and the conversion of 2-polyprenyl-6-methoxy-1,4-benzoquinol (DDMQH2) to 2-polyprenyl-3-methyl-6-methoxy-1,4-benzoquinol (DMQH2). This Geotalea daltonii (strain DSM 22248 / JCM 15807 / FRC-32) (Geobacter daltonii) protein is Ubiquinone/menaquinone biosynthesis C-methyltransferase UbiE.